A 302-amino-acid polypeptide reads, in one-letter code: Acetylglutamate kinase (302 aa).

Residues 75–76 (GG), arginine 97, and asparagine 198 contribute to the substrate site.

Belongs to the acetylglutamate kinase family. ArgB subfamily.

It localises to the cytoplasm. It catalyses the reaction N-acetyl-L-glutamate + ATP = N-acetyl-L-glutamyl 5-phosphate + ADP. It functions in the pathway amino-acid biosynthesis; L-arginine biosynthesis; N(2)-acetyl-L-ornithine from L-glutamate: step 2/4. In terms of biological role, catalyzes the ATP-dependent phosphorylation of N-acetyl-L-glutamate. The chain is Acetylglutamate kinase from Leifsonia xyli subsp. xyli (strain CTCB07).